The chain runs to 431 residues: Enolase (431 aa).

Q167 is a binding site for (2R)-2-phosphoglycerate. E209 acts as the Proton donor in catalysis. D246, E290, and D316 together coordinate Mg(2+). K341, R370, S371, and K392 together coordinate (2R)-2-phosphoglycerate. K341 (proton acceptor) is an active-site residue.

This sequence belongs to the enolase family. In terms of assembly, component of the RNA degradosome, a multiprotein complex involved in RNA processing and mRNA degradation. Requires Mg(2+) as cofactor.

It is found in the cytoplasm. The protein resides in the secreted. Its subcellular location is the cell surface. The catalysed reaction is (2R)-2-phosphoglycerate = phosphoenolpyruvate + H2O. It functions in the pathway carbohydrate degradation; glycolysis; pyruvate from D-glyceraldehyde 3-phosphate: step 4/5. Catalyzes the reversible conversion of 2-phosphoglycerate (2-PG) into phosphoenolpyruvate (PEP). It is essential for the degradation of carbohydrates via glycolysis. The protein is Enolase of Shigella flexneri serotype 5b (strain 8401).